We begin with the raw amino-acid sequence, 401 residues long: Glutamyl-tRNA reductase (401 aa).

Residues 49-52 (TCNR), serine 92, 97-99 (END), and glutamine 103 contribute to the substrate site. The active-site Nucleophile is cysteine 50. Position 171 to 176 (171 to 176 (GNGKMA)) interacts with NADP(+).

This sequence belongs to the glutamyl-tRNA reductase family. As to quaternary structure, homodimer.

It catalyses the reaction (S)-4-amino-5-oxopentanoate + tRNA(Glu) + NADP(+) = L-glutamyl-tRNA(Glu) + NADPH + H(+). Its pathway is porphyrin-containing compound metabolism; protoporphyrin-IX biosynthesis; 5-aminolevulinate from L-glutamyl-tRNA(Glu): step 1/2. Functionally, catalyzes the NADPH-dependent reduction of glutamyl-tRNA(Glu) to glutamate 1-semialdehyde (GSA). In Picrophilus torridus (strain ATCC 700027 / DSM 9790 / JCM 10055 / NBRC 100828 / KAW 2/3), this protein is Glutamyl-tRNA reductase.